The sequence spans 145 residues: Small ribosomal subunit protein eS19 (145 aa).

Position 23 is an N6-acetyllysine (Lys-23). Residue Arg-67 is modified to Omega-N-methylarginine. N6-acetyllysine occurs at positions 111 and 115. Residue Lys-143 is modified to N6-succinyllysine.

The protein belongs to the eukaryotic ribosomal protein eS19 family. Component of the small ribosomal subunit. Part of the small subunit (SSU) processome, composed of more than 70 proteins and the RNA chaperone small nucleolar RNA (snoRNA) U3. Interacts with RPS19BP1; the interaction is direct and mediates the integration of RPS19 in state post-A1. Interacts with RPS19BP1.

It localises to the cytoplasm. The protein resides in the nucleus. Its subcellular location is the nucleolus. In terms of biological role, component of the small ribosomal subunit. The ribosome is a large ribonucleoprotein complex responsible for the synthesis of proteins in the cell. Required for pre-rRNA processing and maturation of 40S ribosomal subunits. Part of the small subunit (SSU) processome, first precursor of the small eukaryotic ribosomal subunit. During the assembly of the SSU processome in the nucleolus, many ribosome biogenesis factors, an RNA chaperone and ribosomal proteins associate with the nascent pre-rRNA and work in concert to generate RNA folding, modifications, rearrangements and cleavage as well as targeted degradation of pre-ribosomal RNA by the RNA exosome. This Oryctolagus cuniculus (Rabbit) protein is Small ribosomal subunit protein eS19 (RPS19).